Here is a 289-residue protein sequence, read N- to C-terminus: MPQEQYSHHRSTMPSSEGPHIYKVGIYGWRKRCLYFFVLLLMILILVNLAMTIWILKVMNFTIDGMGNLRITEKGLKLEGDSEFLQPLYAKEIKSRPGNALYFKSARNVTVNILNDQTKVLTQLVTGPKAVEAYGKRFEVKTVSGKLLFSADDSEVVVGAERLRVLGAEGTVFPKSIETPNVRADPFKELRLESPTRSLVMEAPKGVEINAEAGNMEAICRSELRLESKDGEIKLDAAKIKLPRLPRGSYTPTGTRQKVFEVCVCANGRLFLSQAGTGSTCQINTSVCL.

The Cytoplasmic portion of the chain corresponds to 1-37; it reads MPQEQYSHHRSTMPSSEGPHIYKVGIYGWRKRCLYFF. Residues 38 to 56 traverse the membrane as a helical; Signal-anchor for type II membrane protein segment; sequence VLLLMILILVNLAMTIWIL. The Extracellular portion of the chain corresponds to 57 to 289; it reads KVMNFTIDGM…TCQINTSVCL (233 aa). N-linked (GlcNAc...) asparagine glycans are attached at residues N60 and N108. 2 disulfides stabilise this stretch: C263–C288 and C265–C281. N284 carries N-linked (GlcNAc...) asparagine glycosylation.

Belongs to the sarcoglycan beta/delta/gamma/zeta family. As to quaternary structure, interacts with FLNC. Cross-link to form 2 major subcomplexes: one consisting of SGCB, SGCD and SGCG and the other consisting of SGCB and SGCD. The association between SGCB and SGCG is particularly strong while SGCA is loosely associated with the other sarcoglycans. Interacts with DAG1. Disulfide bonds are present. As to expression, most strongly expressed in skeletal and heart muscle. Also detected in proliferating myoblasts.

The protein localises to the cell membrane. It localises to the sarcolemma. The protein resides in the cytoplasm. It is found in the cytoskeleton. Its function is as follows. Component of the sarcoglycan complex, a subcomplex of the dystrophin-glycoprotein complex which forms a link between the F-actin cytoskeleton and the extracellular matrix. The polypeptide is Delta-sarcoglycan (Sgcd) (Mus musculus (Mouse)).